A 430-amino-acid polypeptide reads, in one-letter code: Protein DSE3 (430 aa).

A Phosphoserine modification is found at S395.

It localises to the bud neck. May be involved in the establishment of the daughter fate. The polypeptide is Protein DSE3 (DSE3) (Saccharomyces cerevisiae (strain ATCC 204508 / S288c) (Baker's yeast)).